Consider the following 528-residue polypeptide: Exodeoxyribonuclease 7 large subunit (528 aa).

Residues 486 to 528 are disordered; it reads QGDRDAVIDGESSGVLPPSAAPAPTRPTPRPKPASSSDQGSLF. Over residues 504–517 the composition is skewed to pro residues; the sequence is SAAPAPTRPTPRPK.

It belongs to the XseA family. As to quaternary structure, heterooligomer composed of large and small subunits.

The protein localises to the cytoplasm. It carries out the reaction Exonucleolytic cleavage in either 5'- to 3'- or 3'- to 5'-direction to yield nucleoside 5'-phosphates.. Its function is as follows. Bidirectionally degrades single-stranded DNA into large acid-insoluble oligonucleotides, which are then degraded further into small acid-soluble oligonucleotides. The sequence is that of Exodeoxyribonuclease 7 large subunit from Caulobacter sp. (strain K31).